Consider the following 75-residue polypeptide: Scuwaprin-a (75 aa).

Positions 1–24 are cleaved as a signal peptide; the sequence is MSSGGLLLLLGLLTLWAELTPVSG. In terms of domain architecture, WAP spans 27–72; sequence RPKKPGLCPPRPQKPPCVKECKNDWSCPGQQKCCSYGCIDECRDPI. Disulfide bonds link C34-C60, C43-C64, C47-C59, and C53-C68.

Belongs to the venom waprin family. Expressed by the venom gland.

Its subcellular location is the secreted. Its function is as follows. Damages membranes of susceptible bacteria. Has no hemolytic activity. Not toxic to mice. Does not inhibit the proteinases elastase and cathepsin G. The protein is Scuwaprin-a of Oxyuranus scutellatus scutellatus (Australian taipan).